The following is a 1142-amino-acid chain: Zinc finger MYM-type protein 1 (1142 aa).

Lys25 is covalently cross-linked (Glycyl lysine isopeptide (Lys-Gly) (interchain with G-Cter in SUMO2)). 3 MYM-type zinc fingers span residues 110–148 (QLFC…PKDV), 160–203 (KTFC…QYEV), and 210–245 (HNLC…SSSL). A Glycyl lysine isopeptide (Lys-Gly) (interchain with G-Cter in SUMO2) cross-link involves residue Lys284. An MYM-type 4 zinc finger spans residues 300–331 (ELFCSINCFSAYSKAKMESSSVSVVSVVHDTS). Positions 385 to 396 (KSSPSEPSNAVA) are enriched in polar residues. Positions 385–413 (KSSPSEPSNAVASSSTEQPSVSPSSSVFS) are disordered. The span at 397-413 (SSSTEQPSVSPSSSVFS) shows a compositional bias: low complexity. The segment at 452–538 (KSRSIKKSCC…YQFCDGAVSD (87 aa)) adopts a TTF-type zinc-finger fold.

The protein resides in the nucleus. The protein is Zinc finger MYM-type protein 1 (ZMYM1) of Homo sapiens (Human).